A 269-amino-acid chain; its full sequence is Phosphatidylglycerophosphate phosphatase 1, chloroplastic (269 aa).

The transit peptide at 1 to 33 directs the protein to the chloroplast; it reads MRSVPGPSPPCTRSLAHSCRAAARGPCGSARPR. The disordered stretch occupies residues 25-46; it reads GPCGSARPRARSVSARAHSSEA. Residues 29 to 46 are compositionally biased toward low complexity; sequence SARPRARSVSARAHSSEA. The Phosphoryl acceptor motif lies at 103–107; it reads DKDNT.

It belongs to the HAD-like hydrolase superfamily.

The protein localises to the plastid. The protein resides in the chloroplast. The catalysed reaction is a 1,2-diacyl-sn-glycero-3-phospho-(1'-sn-glycero-3'-phosphate) + H2O = a 1,2-diacyl-sn-glycero-3-phospho-(1'-sn-glycerol) + phosphate. The protein operates within phospholipid metabolism; phosphatidylglycerol biosynthesis; phosphatidylglycerol from CDP-diacylglycerol: step 2/2. Functionally, phosphatidylglycerophosphate phosphatase involved in the biosynthesis of phosphatidylglycerol (PG), a phosphoglycerolipid predominantly present in chloroplastic thylakoid membranes and which has important photosynthetic function. Required for thylakoid membranes development and chloroplast function. The protein is Phosphatidylglycerophosphate phosphatase 1, chloroplastic of Chlamydomonas reinhardtii (Chlamydomonas smithii).